The following is a 600-amino-acid chain: Adenine deaminase 2 (600 aa).

Belongs to the metallo-dependent hydrolases superfamily. Adenine deaminase family. Mn(2+) is required as a cofactor.

It catalyses the reaction adenine + H2O + H(+) = hypoxanthine + NH4(+). The sequence is that of Adenine deaminase 2 from Bradyrhizobium sp. (strain ORS 278).